The chain runs to 1010 residues: Regulator of telomere elongation helicase 1 homolog (1010 aa).

Residues 7–333 enclose the Helicase ATP-binding domain; it reads NGITVNFPFE…KEMLLQLEKT (327 aa). Residue 42-49 coordinates ATP; sequence SPTGTGKT. [4Fe-4S] cluster-binding residues include C157, C175, C184, and C220. The DEAH box motif lies at 263–266; sequence DEAH. Residues 912 to 931 are disordered; sequence TSDDEDPGRTGDDPTRQAPE. A compositionally biased stretch (basic and acidic residues) spans 918–931; sequence PGRTGDDPTRQAPE.

Belongs to the helicase family. RAD3/XPD subfamily.

It is found in the nucleus. The enzyme catalyses ATP + H2O = ADP + phosphate + H(+). In terms of biological role, a probable ATP-dependent DNA helicase implicated in DNA repair and the maintenance of genomic stability. Acts as an anti-recombinase to counteract toxic recombination and limit crossover during meiosis. Regulates meiotic recombination and crossover homeostasis by physically dissociating strand invasion events and thereby promotes noncrossover repair by meiotic synthesis dependent strand annealing (SDSA) as well as disassembly of D loop recombination intermediates. This chain is Regulator of telomere elongation helicase 1 homolog, found in Aedes aegypti (Yellowfever mosquito).